The primary structure comprises 386 residues: MGNTEIVAMILAGGQGSRLGVLTKKLAKPAVPFGGKYRIIDFPLSNCANSGIYTVGVLTQYKPLELNAHIGIGLPWDLDRKDGGVSILPPYQEEKGGNWYKGTANAIYQNIEFVDRYDPEYVLILSGDHIYKMNYTKMLEFHKEKNADATIGVIEVPVNEASRFGIMNTRDDMSIYEFEEKPKIPKSNLASMGIYIFNWKTLKKYLRNDEANKSSSNDFGKDIIPSMLNDGGKMVAYPFEGYWKDVGTIESLWQANMDLLKSDNKLNLHDQDWRIYSTNPVRPAQYIGENAKVTNSLIVEGCTVNGTVQNSVLFQGVQVGKNTIIKDSVIMTNAKIGDNVIIEKAIIGNDAVIRKDCVIGTGDEIEIVAAKEEVKMGSIMKNSKAV.

Residues Tyr100, Gly165, 180–181, and Ser191 contribute to the alpha-D-glucose 1-phosphate site; that span reads EK.

This sequence belongs to the bacterial/plant glucose-1-phosphate adenylyltransferase family. As to quaternary structure, homotetramer.

It catalyses the reaction alpha-D-glucose 1-phosphate + ATP + H(+) = ADP-alpha-D-glucose + diphosphate. It participates in glycan biosynthesis; glycogen biosynthesis. Involved in the biosynthesis of ADP-glucose, a building block required for the elongation reactions to produce glycogen. Catalyzes the reaction between ATP and alpha-D-glucose 1-phosphate (G1P) to produce pyrophosphate and ADP-Glc. This is Glucose-1-phosphate adenylyltransferase from Clostridium botulinum (strain Alaska E43 / Type E3).